The chain runs to 415 residues: Actin-like protein 7B (415 aa).

A disordered region spans residues 1–35 (MATRNSPMALGTAQGDPGEAGTRPGSDAGLRDTGA). Phosphoserine is present on serine 6.

It belongs to the actin family.

It is found in the cytoplasm. It localises to the cytoskeleton. This chain is Actin-like protein 7B (ACTL7B), found in Macaca fascicularis (Crab-eating macaque).